A 341-amino-acid chain; its full sequence is GTP 3',8-cyclase (341 aa).

Positions 11–231 (KRNRPLRDLR…DLINKHMPVE (221 aa)) constitute a Radical SAM core domain. Arg-20 serves as a coordination point for GTP. [4Fe-4S] cluster-binding residues include Cys-27 and Cys-31. Tyr-33 contacts S-adenosyl-L-methionine. Cys-34 serves as a coordination point for [4Fe-4S] cluster. A GTP-binding site is contributed by Arg-75. Gly-79 contacts S-adenosyl-L-methionine. A GTP-binding site is contributed by Thr-106. Residue Ser-130 participates in S-adenosyl-L-methionine binding. Position 167 (Lys-167) interacts with GTP. Position 201 (Met-201) interacts with S-adenosyl-L-methionine. [4Fe-4S] cluster-binding residues include Cys-265 and Cys-268. Position 270–272 (270–272 (RAR)) interacts with GTP. Cys-282 lines the [4Fe-4S] cluster pocket.

The protein belongs to the radical SAM superfamily. MoaA family. Monomer and homodimer. Requires [4Fe-4S] cluster as cofactor.

It catalyses the reaction GTP + AH2 + S-adenosyl-L-methionine = (8S)-3',8-cyclo-7,8-dihydroguanosine 5'-triphosphate + 5'-deoxyadenosine + L-methionine + A + H(+). The protein operates within cofactor biosynthesis; molybdopterin biosynthesis. In terms of biological role, catalyzes the cyclization of GTP to (8S)-3',8-cyclo-7,8-dihydroguanosine 5'-triphosphate. Required for both nitrate assimilation and respiration. This is GTP 3',8-cyclase from Bacillus subtilis (strain 168).